The following is a 696-amino-acid chain: Tegument protein UL47 (696 aa).

Composition is skewed to basic residues over residues 1–15 (MSVRGHAVRRRRAST) and 70–81 (RRRREARGHPGS). Disordered stretches follow at residues 1 to 39 (MSVRGHAVRRRRASTRSHAPSAHRADSPVEDEPEGGGVG) and 54 to 130 (SEVE…YLGP). An RNA-binding region spans residues 57-84 (EAAGEMASEEPPPRRRREARGHPGSRRA). The short motif at 70-84 (RRRREARGHPGSRRA) is the Nuclear localization signal element. A compositionally biased stretch (low complexity) spans 87 to 103 (ARAAAPPRRASFPRPRS). The Nuclear export signal motif lies at 650–673 (SVLGPRVRVVDIMAQFRKLLMGDE).

The protein belongs to the alphaherpesvirinae HHV-1 UL47 family. Interacts with US3 kinase. Interacts with UL31 and UL34; these interactions seem important for efficient virion nuclear egress. Interacts with UL41/VHS. Phosphorylated by US3. This phosphorylation is required for proper nuclear localization.

The protein localises to the virion tegument. It localises to the host nucleus. It is found in the host cytoplasm. Functionally, tegument protein that can bind to various RNA transcripts. Plays a role in the attenuation of selective viral and cellular mRNA degradation by modulating the activity of host shutoff RNase UL41/VHS. Also plays a role in the primary envelopment of virions in the perinuclear space, probably by interacting with two nuclear egress proteins UL31 and UL34. The chain is Tegument protein UL47 from Human herpesvirus 2 (strain HG52) (HHV-2).